Here is a 1065-residue protein sequence, read N- to C-terminus: Leucine-rich repeats and immunoglobulin-like domains protein 2 (1065 aa).

A signal peptide spans 1–40 (MAPAPLGVPEEQLLGCRSRVLSRLLFIAQTALLLLPAAGA). Positions 41–75 (GLCPAPCSCRIPLLDCSRRKLPAPSWRALSGLLPP) constitute an LRRNT domain. The Extracellular portion of the chain corresponds to 41–807 (GLCPAPCSCR…HEDDGWTTVG (767 aa)). LRR repeat units lie at residues 76–97 (DTAI…LESQ), 98–119 (TLQE…GEPT), 121–142 (NITL…ALQF), 145–166 (ALES…SFPR), 168–189 (QLKY…CFDN), 193–214 (SLLV…IFKL), 216–237 (HLQF…TFQG), 240–261 (SLRS…AFFG), 264–285 (NMEE…WLYG), 288–309 (MLQQ…AWEF), 312–333 (RLSE…AFVG), 336–357 (LLER…VFRF), 360–382 (NLQT…SEAF), 387–408 (SLTK…AFIG), and 411–432 (SLEH…AFSQ). N-linked (GlcNAc...) asparagine glycosylation is present at asparagine 91. Asparagine 121 carries N-linked (GlcNAc...) asparagine glycosylation. 2 N-linked (GlcNAc...) asparagine glycosylation sites follow: asparagine 173 and asparagine 189. A glycan (N-linked (GlcNAc...) asparagine) is linked at asparagine 274. 5 N-linked (GlcNAc...) asparagine glycosylation sites follow: asparagine 441, asparagine 468, asparagine 514, asparagine 571, and asparagine 589. The LRRCT domain occupies 443–494 (SSLLCDCHLKWLLQWLVDNNFQHSVNVSCAHPEWLAGQSILNVDLKDFVCDD). 3 consecutive Ig-like C2-type domains span residues 498-597 (PQIR…AKLT), 602-691 (PSFL…ASLT), and 696-785 (PSFI…NVIS). The cysteines at positions 519 and 580 are disulfide-linked. Cysteine 623 and cysteine 675 form a disulfide bridge. N-linked (GlcNAc...) asparagine glycans are attached at residues asparagine 687 and asparagine 728. The cysteines at positions 717 and 766 are disulfide-linked. The chain crosses the membrane as a helical span at residues 808 to 828 (IVIIVVVCCVVGTSLIWVIVI). Residues 829 to 1065 (YHMRRKNEDY…RNIQDGSEGT (237 aa)) lie on the Cytoplasmic side of the membrane. Tyrosine 906 bears the Phosphotyrosine mark. Disordered stretches follow at residues 963 to 990 (SANR…QMSG) and 1003 to 1040 (ELGL…ASSM). The span at 974-983 (NHERISEKKL) shows a compositional bias: basic and acidic residues. Residues 1013-1024 (QQPVHESPQLHQ) are compositionally biased toward polar residues.

In terms of tissue distribution, detected in all tissues analyzed.

It is found in the cell membrane. It localises to the cytoplasm. This Homo sapiens (Human) protein is Leucine-rich repeats and immunoglobulin-like domains protein 2 (LRIG2).